Here is a 289-residue protein sequence, read N- to C-terminus: ATP synthase gamma chain (289 aa).

It belongs to the ATPase gamma chain family. F-type ATPases have 2 components, CF(1) - the catalytic core - and CF(0) - the membrane proton channel. CF(1) has five subunits: alpha(3), beta(3), gamma(1), delta(1), epsilon(1). CF(0) has three main subunits: a, b and c.

Its subcellular location is the cell inner membrane. Functionally, produces ATP from ADP in the presence of a proton gradient across the membrane. The gamma chain is believed to be important in regulating ATPase activity and the flow of protons through the CF(0) complex. The polypeptide is ATP synthase gamma chain (Azorhizobium caulinodans (strain ATCC 43989 / DSM 5975 / JCM 20966 / LMG 6465 / NBRC 14845 / NCIMB 13405 / ORS 571)).